We begin with the raw amino-acid sequence, 272 residues long: MLLAIDVRNTHTVVGLLSGMKEHAKVVQQWRIRTESEVTADELALTIDGLIGEDSERLTGTAALSTVPSVLHEVRIMLDQYWPSVPHVLIEPGVRTGIPLLVDNPKEVGADRIVNCLAAYDRFRKAAIVVDFGSSICVDVVSAKGEFLGGAIAPGVQVSSDAAAARSAALRRVELARPRSVVGKNTVECMQAGAVFGFAGLVDGLVGRIREDVSGFSVDHDVAIVATGHTAPLLLPELHTVDHYDQHLTLQGLRLVFERNLEVQRGRLKTAR.

6–13 (DVRNTHTV) contributes to the ATP binding site. 109-112 (GADR) lines the substrate pocket. Residue Asp111 is the Proton acceptor of the active site. Asp131 lines the K(+) pocket. Ser134 is an ATP binding site. Thr186 contacts substrate.

Belongs to the type III pantothenate kinase family. In terms of assembly, homodimer. NH4(+) serves as cofactor. Requires K(+) as cofactor.

Its subcellular location is the cytoplasm. It catalyses the reaction (R)-pantothenate + ATP = (R)-4'-phosphopantothenate + ADP + H(+). Its pathway is cofactor biosynthesis; coenzyme A biosynthesis; CoA from (R)-pantothenate: step 1/5. Functionally, catalyzes the phosphorylation of pantothenate (Pan), the first step in CoA biosynthesis. This Mycobacterium bovis (strain BCG / Pasteur 1173P2) protein is Type III pantothenate kinase.